The chain runs to 86 residues: RNA-binding protein Hfq (86 aa).

The Sm domain maps to 9-69 (DRFLNILRTS…VSTIMPESFV (61 aa)).

This sequence belongs to the Hfq family. Homohexamer.

Functionally, RNA chaperone that binds small regulatory RNA (sRNAs) and mRNAs to facilitate mRNA translational regulation in response to envelope stress, environmental stress and changes in metabolite concentrations. Also binds with high specificity to tRNAs. The protein is RNA-binding protein Hfq of Thermosipho melanesiensis (strain DSM 12029 / CIP 104789 / BI429).